We begin with the raw amino-acid sequence, 389 residues long: Glutaryl-CoA dehydrogenase (389 aa).

Arg-87 and Asn-91 together coordinate substrate. FAD contacts are provided by residues 126-129 (FGIT), Ser-135, and 159-161 (WIS). A substrate-binding site is contributed by Ser-135. Ser-181 is a substrate binding site. FAD-binding positions include Arg-271, 281-284 (FQMN), Arg-340, Ala-344, and 367-371 (EGSAN). The active-site Proton acceptor is the Glu-367. Arg-385 lines the substrate pocket.

The protein belongs to the acyl-CoA dehydrogenase family. In terms of assembly, homotetramer. FAD serves as cofactor.

The catalysed reaction is glutaryl-CoA + A = (2E)-glutaconyl-CoA + AH2. The protein operates within aromatic compound metabolism; benzoyl-CoA degradation. Inhibited by glutaconyl-CoA. In terms of biological role, catalyzes the dehydrogenation of Glutaryl-CoA to glutaconyl-CoA. The polypeptide is Glutaryl-CoA dehydrogenase (Acd) (Desulfococcus multivorans).